The sequence spans 145 residues: uncharacterized protein (145 aa).

Positions 1–22 (MLTRLVLSAHLSSTTSPPWTHA) are cleaved as a signal peptide. N-linked (GlcNAc...) asparagine glycosylation occurs at Asn-98. The interval 103–145 (SSGQQRQAARQEEENSICKAHDSREGRLGYPLSAHQPGSGGPN) is disordered.

Its subcellular location is the secreted. This is an uncharacterized protein from Homo sapiens (Human).